We begin with the raw amino-acid sequence, 114 residues long: Gas vesicle protein J1 (114 aa).

Positions 13 to 22 (LAEMLEMLLD) are alpha helix 1. Beta-strand stretches follow at residues 25–35 (VVVNADIAVSV) and 40–50 (LLGIELRAAIA). The Conserved in GvpM1/2 but not GvpA signature appears at 46 to 50 (RAAIA). Alpha helix regions lie at residues 52–72 (FETA…ERVE), 78–87 (SPDQSDPASE), and 95–105 (TNPLSDDSTPT). Positions 63-114 (PTGTDMERVESAANISPDQSDPASETQSETESTNPLSDDSTPTASTSAEETK) are disordered. Polar residues predominate over residues 75–98 (ANISPDQSDPASETQSETESTNPL). Low complexity predominate over residues 99–114 (SDDSTPTASTSAEETK).

The protein belongs to the gas vesicle GvpA family. In terms of assembly, gvpF to GvpM interact with each other in vitro, and may form multi-subunit complex(es). Interacts with GvpA1.

The protein localises to the gas vesicle. In terms of biological role, proteins GvpF to GvpM might be involved in nucleating gas vesicle formation. Mutagenesis of residues 13-61 shows that almost none of them can be substituted and still make gas vesicles. A minor component of the gas vesicle. Gas vesicles are hollow, gas filled proteinaceous nanostructures found in several microbial planktonic microorganisms. They allow positioning of halobacteria at the optimal depth for growth in the poorly aerated, shallow brine pools of their habitat. Expression of a 9.5 kb p-vac DNA fragment containing 2 divergently transcribed regions (gvpD-gvpE-gvpF-gvpG-gvpH-gvpI-gvpJ-gvpK-gvpL-gvpM and gvpA-gvpC-gvpN-gvpO) allows H.volcanii to produce gas vesicles. All site-directed mutagenesis is tested in H.volcanii. A minimal gas vesicle can be made in H.volcanii by gvpA1-gvpO1 plus gvpF1-gvpG1-gvpJ1-gvpK1-gvpL1-gvpM1; lack of enough GvpJ1 prevents formation. A similar region restores gas vesicle production in H.halobium without the p-vac locus, but it still has the c-vac locus. This is Gas vesicle protein J1 (gvpJ11) from Halobacterium salinarum (strain ATCC 700922 / JCM 11081 / NRC-1) (Halobacterium halobium).